The sequence spans 166 residues: PTS system glucose-specific EIIA component (166 aa).

The region spanning aspartate 34–asparagine 138 is the PTS EIIA type-1 domain. 2 residues coordinate Zn(2+): histidine 71 and histidine 86. Histidine 86 serves as the catalytic Tele-phosphohistidine intermediate; for EIIA activity. Histidine 86 carries the phosphohistidine; by HPr modification.

Heterodimer with glycerol kinase (glpk). It depends on Zn(2+) as a cofactor.

The protein localises to the cytoplasm. In terms of biological role, the phosphoenolpyruvate-dependent sugar phosphotransferase system (sugar PTS), a major carbohydrate active transport system, catalyzes the phosphorylation of incoming sugar substrates concomitantly with their translocation across the cell membrane. The enzyme II complex composed of PtsG and Crr is involved in glucose transport. The chain is PTS system glucose-specific EIIA component (crr) from Staphylococcus epidermidis (strain ATCC 35984 / DSM 28319 / BCRC 17069 / CCUG 31568 / BM 3577 / RP62A).